A 216-amino-acid polypeptide reads, in one-letter code: Somatotropin (216 aa).

Residues 1–26 (MAADPQSSVLLAFALLCLPWPQEVGA) form the signal peptide. Residue H45 participates in Zn(2+) binding. The cysteines at positions 78 and 189 are disulfide-linked. The residue at position 131 (S131) is a Phosphoserine. E198 is a binding site for Zn(2+). A disulfide bond links C206 and C214.

It belongs to the somatotropin/prolactin family.

It localises to the secreted. Its function is as follows. Plays an important role in growth control. Its major role in stimulating body growth is to stimulate the liver and other tissues to secrete IGF1. It stimulates both the differentiation and proliferation of myoblasts. It also stimulates amino acid uptake and protein synthesis in muscle and other tissues. This chain is Somatotropin (GH1), found in Ailuropoda melanoleuca (Giant panda).